A 396-amino-acid polypeptide reads, in one-letter code: Elongation factor Tu (396 aa).

A tr-type G domain is found at 10–206; sequence KPHCNIGTIG…AVDAYIPQPE (197 aa). The segment at 19-26 is G1; sequence GHVDHGKT. 19–26 contacts GTP; the sequence is GHVDHGKT. Threonine 26 is a binding site for Mg(2+). The interval 60-64 is G2; the sequence is GITIS. The interval 81–84 is G3; the sequence is DCPG. GTP contacts are provided by residues 81–85 and 136–139; these read DCPGH and NKVD. The interval 136–139 is G4; the sequence is NKVD. The G5 stretch occupies residues 174–176; sequence SAL.

The protein belongs to the TRAFAC class translation factor GTPase superfamily. Classic translation factor GTPase family. EF-Tu/EF-1A subfamily. In terms of assembly, monomer.

Its subcellular location is the cytoplasm. It catalyses the reaction GTP + H2O = GDP + phosphate + H(+). Its function is as follows. GTP hydrolase that promotes the GTP-dependent binding of aminoacyl-tRNA to the A-site of ribosomes during protein biosynthesis. The sequence is that of Elongation factor Tu from Granulibacter bethesdensis (strain ATCC BAA-1260 / CGDNIH1).